The chain runs to 956 residues: MAM domain-containing glycosylphosphatidylinositol anchor protein 1 (956 aa).

Residues 1-18 form the signal peptide; sequence MEVTCLLLLALIPFHCRG. 2 Ig-like domains span residues 24-123 and 132-230; these read PAQA…KSIR and PVLT…KSIT. Residue N42 is glycosylated (N-linked (GlcNAc...) asparagine). 2 cysteine pairs are disulfide-bonded: C60/C108 and C157/C214. N235, N257, and N307 each carry an N-linked (GlcNAc...) asparagine glycan. 4 Ig-like domains span residues 240 to 323, 338 to 432, 440 to 534, and 539 to 632; these read PTLK…KTVN, PDMI…VEVN, PTIS…VQLT, and PEVE…FQVS. 4 disulfide bridges follow: C262–C308, C357–C415, C463–C514, and C560–C616. Positions 644-744 constitute a Fibronectin type-III domain; sequence TPNPTRSHKL…SRVIHYTEPI (101 aa). The MAM domain occupies 752 to 919; the sequence is NTCHFEDEKI…VTLKKGECPR (168 aa). Polar residues predominate over residues 780–789; sequence LTQNPKRSPN. The interval 780–799 is disordered; it reads LTQNPKRSPNTGPPTDISGT. S933 carries GPI-anchor amidated serine lipidation. Positions 934–956 are cleaved as a propeptide — removed in mature form; that stretch reads GAPRLSSLQLWGSMTIFLLALQR.

Interacts heterophilically through its MAM domain with proteins in axon-rich regions and through its Ig-like domains with proteins in differentiating muscle. Interacts (through the Ig-like domains) with NLGN2. High levels detected in developing central and peripheral nervous systems with little expression elsewhere. In brain, highest levels in cerebral cortex and hindbrain at E15. At postnatal day 1, highest levels in basilar pons and superficial layers of the neocortex. In the developing spinal cord, restricted to a subpopulation of neurons in the dorsal and spinal ventral cord, probably D1 interneurons. Expressed in brain.

The protein resides in the cell membrane. Required for radial migration of cortical neurons in the superficial layer of the neocortex. Plays a role in the formation or maintenance of inhibitory synapses. May function by inhibiting the activity of NLGN2. The chain is MAM domain-containing glycosylphosphatidylinositol anchor protein 1 (Mdga1) from Rattus norvegicus (Rat).